Reading from the N-terminus, the 201-residue chain is Large ribosomal subunit protein uL4 (201 aa).

The segment at 43 to 69 is disordered; sequence TKAQKTRSEVAGGGKKPWRQKGTGRAR.

It belongs to the universal ribosomal protein uL4 family. As to quaternary structure, part of the 50S ribosomal subunit.

In terms of biological role, one of the primary rRNA binding proteins, this protein initially binds near the 5'-end of the 23S rRNA. It is important during the early stages of 50S assembly. It makes multiple contacts with different domains of the 23S rRNA in the assembled 50S subunit and ribosome. Its function is as follows. Forms part of the polypeptide exit tunnel. The protein is Large ribosomal subunit protein uL4 of Idiomarina loihiensis (strain ATCC BAA-735 / DSM 15497 / L2-TR).